Reading from the N-terminus, the 60-residue chain is Cytotoxin 2 (60 aa).

Intrachain disulfides connect Cys-3/Cys-21, Cys-14/Cys-38, Cys-42/Cys-53, and Cys-54/Cys-59.

Belongs to the three-finger toxin family. Short-chain subfamily. Type IA cytotoxin sub-subfamily. Monomer in solution; Homodimer and oligomer in the presence of negatively charged lipids forming a pore with a size ranging between 20 and 30 Angstroms. As to expression, expressed by the venom gland.

It is found in the secreted. The protein resides in the target cell membrane. In terms of biological role, this three-finger cytotoxin is a basic protein that interacts and penetrates into the cell membrane, with the tips of all the three loops. Cytotoxins which have a Pro-30 (P-type) interacts with membrane stronger that those which have a 'Ser-28' (S-type). CTII interacts with membrane stronger than CTI. The protein is Cytotoxin 2 of Naja oxiana (Central Asian cobra).